A 236-amino-acid chain; its full sequence is 5'-methylthioadenosine/S-adenosylhomocysteine nucleosidase (236 aa).

Glutamate 12 serves as the catalytic Proton acceptor. Substrate is bound by residues glycine 78, isoleucine 153, and 174–175 (ME). Aspartate 198 serves as the catalytic Proton donor.

The protein belongs to the PNP/UDP phosphorylase family. MtnN subfamily.

The enzyme catalyses S-adenosyl-L-homocysteine + H2O = S-(5-deoxy-D-ribos-5-yl)-L-homocysteine + adenine. It carries out the reaction S-methyl-5'-thioadenosine + H2O = 5-(methylsulfanyl)-D-ribose + adenine. It catalyses the reaction 5'-deoxyadenosine + H2O = 5-deoxy-D-ribose + adenine. The protein operates within amino-acid biosynthesis; L-methionine biosynthesis via salvage pathway; S-methyl-5-thio-alpha-D-ribose 1-phosphate from S-methyl-5'-thioadenosine (hydrolase route): step 1/2. Catalyzes the irreversible cleavage of the glycosidic bond in both 5'-methylthioadenosine (MTA) and S-adenosylhomocysteine (SAH/AdoHcy) to adenine and the corresponding thioribose, 5'-methylthioribose and S-ribosylhomocysteine, respectively. Also cleaves 5'-deoxyadenosine, a toxic by-product of radical S-adenosylmethionine (SAM) enzymes, into 5-deoxyribose and adenine. The sequence is that of 5'-methylthioadenosine/S-adenosylhomocysteine nucleosidase from Shewanella baltica (strain OS155 / ATCC BAA-1091).